Consider the following 447-residue polypeptide: Phosphoglucosamine mutase (447 aa).

Residue serine 88 is the Phosphoserine intermediate of the active site. Positions 88, 231, 233, and 235 each coordinate Mg(2+). A Phosphoserine modification is found at serine 88.

The protein belongs to the phosphohexose mutase family. The cofactor is Mg(2+). Activated by phosphorylation.

The catalysed reaction is alpha-D-glucosamine 1-phosphate = D-glucosamine 6-phosphate. Functionally, catalyzes the conversion of glucosamine-6-phosphate to glucosamine-1-phosphate. The chain is Phosphoglucosamine mutase from Methanococcus maripaludis (strain C7 / ATCC BAA-1331).